The primary structure comprises 502 residues: Galactose/methyl galactoside import ATP-binding protein MglA (502 aa).

ABC transporter domains are found at residues Leu10–Glu245 and Asn255–Leu502. Residue Gly42 to Ser49 participates in ATP binding.

This sequence belongs to the ABC transporter superfamily. Galactose/methyl galactoside importer (TC 3.A.1.2.3) family. In terms of assembly, the complex is composed of one ATP-binding protein (MglA), two transmembrane proteins (MglC) and a solute-binding protein (MglB).

Its subcellular location is the cell inner membrane. The enzyme catalyses D-galactose(out) + ATP + H2O = D-galactose(in) + ADP + phosphate + H(+). It carries out the reaction methyl beta-D-galactoside(out) + ATP + H2O = methyl beta-D-galactoside(in) + ADP + phosphate + H(+). In terms of biological role, part of the ABC transporter complex MglABC involved in galactose/methyl galactoside import. Responsible for energy coupling to the transport system. The chain is Galactose/methyl galactoside import ATP-binding protein MglA from Vibrio cholerae serotype O1 (strain ATCC 39315 / El Tor Inaba N16961).